The following is a 755-amino-acid chain: Serine/threonine-protein kinase GA29083 (755 aa).

Residues 18–52 (QASASGSGTPKKTAASSAAAQNSKQLLDQLSQQQK) show a composition bias toward low complexity. Residues 18–128 (QASASGSGTP…GSANTNGSAS (111 aa)) form a disordered region. Composition is skewed to basic and acidic residues over residues 53 to 66 (AQEEAETHSRRDCD) and 74 to 84 (EPEKDLDELRD). Residues 87–99 (GSLTGSGSVGKSN) show a composition bias toward polar residues. Low complexity predominate over residues 100–128 (GSLSGASSTTSAPAGTSTPGSANTNGSAS). 2 Doublecortin domains span residues 157-243 (HRIK…VDYN) and 314-397 (RIVT…VEDF). The Protein kinase domain occupies 484 to 742 (YTLSQIIGDG…SEDILDHYWT (259 aa)). ATP-binding positions include 490 to 498 (IGDGNFAIV) and Lys513. The Proton acceptor role is filled by Asp605.

Belongs to the protein kinase superfamily. CAMK Ser/Thr protein kinase family. CaMK subfamily.

The enzyme catalyses L-seryl-[protein] + ATP = O-phospho-L-seryl-[protein] + ADP + H(+). The catalysed reaction is L-threonyl-[protein] + ATP = O-phospho-L-threonyl-[protein] + ADP + H(+). This is Serine/threonine-protein kinase GA29083 from Drosophila pseudoobscura pseudoobscura (Fruit fly).